We begin with the raw amino-acid sequence, 530 residues long: Calcium uptake protein 3, mitochondrial (530 aa).

The N-terminal 43 residues, 1–43 (MAALRRLLWPPPRVSPPLCAHQPLLGPWGRPAVTTLGLPGRPF), are a transit peptide targeting the mitochondrion. The tract at residues 92 to 115 (GSPATGRPSKSAATEPEDPPRGRG) is disordered. The EF-hand 1 domain occupies 232-267 (KPHAGFRIAFNMFDTDGNEMVDKKEFLVLQEIFRKK). Residues D245, D247, N249, M251, D253, and E256 each coordinate Ca(2+). Residues 401–436 (VENTSVFLENVRYSIPEEKGITFDEFRSFFQFLNNL) enclose the EF-hand 2; degenerate domain. Residues 470-505 (FSPHLVNTVFKIFDVDKDDQLSYKEFIGIMKDRLHR) enclose the EF-hand 3 domain. Residues D483, D485, D487, Q489, and E494 each contribute to the Ca(2+) site.

It belongs to the MICU1 family. MICU3 subfamily. In terms of assembly, heterodimer; disulfide-linked; heterodimerizes with MICU1. Component of the uniplex complex, composed of MCU, EMRE/SMDT1, MICU1 and MICU3 in a 4:4:1:1 stoichiometry. In terms of tissue distribution, specifically expressed in the central nervous system and skeletal muscle.

It localises to the mitochondrion intermembrane space. It is found in the mitochondrion inner membrane. In terms of biological role, tissue-specific calcium sensor of the mitochondrial calcium uniporter (MCU) channel, which specifically regulates MCU channel activity in the central nervous system and skeletal muscle. Senses calcium level via its EF-hand domains: compared to MICU1 and MICU2, MICU3 has a higher affinity for calcium. MICU1 and MICU3 form a disulfide-linked heterodimer that stimulates and inhibits MCU activity, depending on the concentration of calcium. At low calcium levels, MICU1 occludes the pore of the MCU channel, preventing mitochondrial calcium uptake. At higher calcium levels, calcium-binding to MICU1 and MICU3 induces a conformational change that weakens MCU-MICU1 interactions and moves the MICU1-MICU3 heterodimer away from the pore, allowing calcium permeation through the MCU channel. The high calcium affinity of MICU3 lowers the calcium threshold necessary for calcium permeation through the MCU channel. The MICU1-MICU3 heterodimer promotes flexibility of neurotransmission in neuronal cells by enhancing mitochondrial calcium uptake in presynapses. It is also required to increase mitochondrial calcium uptake in skeletal muscle cells, thereby increasing ATP production. The polypeptide is Calcium uptake protein 3, mitochondrial (Homo sapiens (Human)).